A 198-amino-acid polypeptide reads, in one-letter code: IMP cyclohydrolase (198 aa).

It belongs to the archaeal IMP cyclohydrolase family.

The enzyme catalyses IMP + H2O = 5-formamido-1-(5-phospho-D-ribosyl)imidazole-4-carboxamide. Its pathway is purine metabolism; IMP biosynthesis via de novo pathway; IMP from 5-formamido-1-(5-phospho-D-ribosyl)imidazole-4-carboxamide: step 1/1. In terms of biological role, catalyzes the cyclization of 5-formylamidoimidazole-4-carboxamide ribonucleotide to IMP. This is IMP cyclohydrolase from Methanopyrus kandleri (strain AV19 / DSM 6324 / JCM 9639 / NBRC 100938).